The sequence spans 819 residues: Capsid-associated protein Vp91 (819 aa).

An N-terminal signal peptide occupies residues methionine 1–threonine 18. The C2HC BV-type zinc finger occupies cysteine 147 to cysteine 196. Disulfide bonds link cysteine 207–cysteine 220 and cysteine 260–cysteine 273. An N-linked (GlcNAc...) asparagine; by host glycan is attached at asparagine 210. Positions asparagine 223–phenylalanine 281 constitute a Chitin-binding type-2 domain. N-linked (GlcNAc...) asparagine; by host glycosylation is found at asparagine 588 and asparagine 609. The disordered stretch occupies residues glycine 650–glutamate 671. Pro residues predominate over residues glutamate 658–glutamate 671. Residue asparagine 752 is glycosylated (N-linked (GlcNAc...) asparagine; by host).

Its subcellular location is the virion. In terms of biological role, probable capsid-associated protein. The protein is Capsid-associated protein Vp91 (p91) of Orgyia pseudotsugata (Douglas-fir tussock moth).